We begin with the raw amino-acid sequence, 260 residues long: Carbonic anhydrase 2 (260 aa).

The 257-residue stretch at 3–259 (HGWGYADHNG…LKDRKVCASF (257 aa)) folds into the Alpha-carbonic anhydrase domain. Catalysis depends on His-64, which acts as the Proton donor/acceptor. Zn(2+) is bound by residues His-94, His-96, and His-119. 198–199 (TT) is a substrate binding site.

This sequence belongs to the alpha-carbonic anhydrase family. Requires Zn(2+) as cofactor.

It localises to the cytoplasm. The catalysed reaction is hydrogencarbonate + H(+) = CO2 + H2O. In terms of biological role, catalyzes the reversible hydration of carbon dioxide. The chain is Carbonic anhydrase 2 (ca2) from Pseudaspius hakonensis (Big-scaled redfin).